Consider the following 515-residue polypeptide: Probable multifunctional siroheme biosynthesis protein HemA (515 aa).

NAD(+) contacts are provided by residues 26–27 (SL) and 47–48 (IR). The segment at 26–174 (SLDYKSAAID…TAAKKAKTEI (149 aa)) is glutamyl-tRNA reductase. Residues 68–71 (TCNR), Ser-127, Glu-132, and Gln-138 each bind L-glutamyl-tRNA(Glu). The active-site Nucleophile is Cys-69. Position 206–211 (206–211 (GNGEIG)) interacts with NADP(+). A precorrin-2 dehydrogenase /sirohydrochlorin ferrochelatase region spans residues 367–507 (FPLFIDLSGK…SLVKSVAEQI (141 aa)).

This sequence in the N-terminal section; belongs to the glutamyl-tRNA reductase family. The protein in the C-terminal section; belongs to the precorrin-2 dehydrogenase / sirohydrochlorin ferrochelatase family. In terms of assembly, homodimer.

It catalyses the reaction (S)-4-amino-5-oxopentanoate + tRNA(Glu) + NADP(+) = L-glutamyl-tRNA(Glu) + NADPH + H(+). The enzyme catalyses precorrin-2 + NAD(+) = sirohydrochlorin + NADH + 2 H(+). The catalysed reaction is siroheme + 2 H(+) = sirohydrochlorin + Fe(2+). The protein operates within cofactor biosynthesis; adenosylcobalamin biosynthesis; sirohydrochlorin from precorrin-2: step 1/1. Its pathway is porphyrin-containing compound metabolism; siroheme biosynthesis; siroheme from sirohydrochlorin: step 1/1. It participates in porphyrin-containing compound metabolism; siroheme biosynthesis; sirohydrochlorin from precorrin-2: step 1/1. It functions in the pathway porphyrin-containing compound metabolism; protoporphyrin-IX biosynthesis; 5-aminolevulinate from L-glutamyl-tRNA(Glu): step 1/2. Functionally, multifunctional enzyme that catalyzes the NADPH-dependent reduction of glutamyl-tRNA(Glu) to glutamate 1-semialdehyde (GSA), the NAD-dependent ring dehydrogenation of precorrin-2 to sirohydrochlorin and finally, the ferrochelation of sirohydrochlorin to yield siroheme. In Ruminiclostridium josui (Clostridium josui), this protein is Probable multifunctional siroheme biosynthesis protein HemA.